Consider the following 436-residue polypeptide: Bystin (436 aa).

At Thr145 the chain carries Phosphothreonine. Phosphoserine occurs at positions 148 and 152.

It belongs to the bystin family.

The protein localises to the nucleus. It localises to the nucleolus. In terms of biological role, required for processing of 20S pre-rRNA precursor and biogenesis of 40S ribosomal subunits. The sequence is that of Bystin (bys) from Drosophila melanogaster (Fruit fly).